A 146-amino-acid chain; its full sequence is Transcriptional regulator MraZ (146 aa).

SpoVT-AbrB domains are found at residues 5-47 (EYYH…TITD) and 76-119 (SIQV…AKEK).

The protein belongs to the MraZ family. In terms of assembly, forms oligomers.

The protein localises to the cytoplasm. The protein resides in the nucleoid. This is Transcriptional regulator MraZ from Dictyoglomus thermophilum (strain ATCC 35947 / DSM 3960 / H-6-12).